Reading from the N-terminus, the 68-residue chain is Beta-defensin 1 (68 aa).

The signal sequence occupies residues 1–21; that stretch reads MRTSYLLLFTLCLLMSEMASG. The propeptide occupies 22 to 32; sequence DNFLTGLGHRS. Cystine bridges form between cysteine 37/cysteine 66, cysteine 44/cysteine 59, and cysteine 49/cysteine 67.

Belongs to the beta-defensin family. Monomer. Homodimer.

The protein resides in the secreted. It localises to the membrane. Its function is as follows. Has bactericidal activity. May act as a ligand for C-C chemokine receptor CCR6. Positively regulates the sperm motility and bactericidal activity in a CCR6-dependent manner. Binds to CCR6 and triggers Ca2+ mobilization in the sperm which is important for its motility. This is Beta-defensin 1 (DEFB1) from Presbytis melalophos (Mitred leaf monkey).